The primary structure comprises 83 residues: Major outer membrane lipoprotein (83 aa).

Positions 1–19 are cleaved as a signal peptide; that stretch reads MNNVLKFSALALAAVLATG. C20 carries the N-palmitoyl cysteine lipid modification. C20 carries the S-diacylglycerol cysteine lipid modification.

Its subcellular location is the cell outer membrane. This chain is Major outer membrane lipoprotein (oprI), found in Pseudomonas aeruginosa (strain ATCC 15692 / DSM 22644 / CIP 104116 / JCM 14847 / LMG 12228 / 1C / PRS 101 / PAO1).